The primary structure comprises 149 residues: Cytochrome c oxidase subunit 5A, mitochondrial (149 aa).

Belongs to the cytochrome c oxidase subunit 5A family. In terms of assembly, component of the cytochrome c oxidase (complex IV, CIV), a multisubunit enzyme composed of a catalytic core of 3 subunits and several supernumerary subunits. The complex exists as a monomer or a dimer and forms supercomplexes (SCs) in the inner mitochondrial membrane with ubiquinol-cytochrome c oxidoreductase (cytochrome b-c1 complex, complex III, CIII).

The protein localises to the mitochondrion inner membrane. The protein operates within energy metabolism; oxidative phosphorylation. In terms of biological role, component of the cytochrome c oxidase, the last enzyme in the mitochondrial electron transport chain which drives oxidative phosphorylation. The respiratory chain contains 3 multisubunit complexes succinate dehydrogenase (complex II, CII), ubiquinol-cytochrome c oxidoreductase (cytochrome b-c1 complex, complex III, CIII) and cytochrome c oxidase (complex IV, CIV), that cooperate to transfer electrons derived from NADH and succinate to molecular oxygen, creating an electrochemical gradient over the inner membrane that drives transmembrane transport and the ATP synthase. Cytochrome c oxidase is the component of the respiratory chain that catalyzes the reduction of oxygen to water. Electrons originating from reduced cytochrome c in the intermembrane space (IMS) are transferred via the dinuclear copper A center (CU(A)) of subunit 2 and heme A of subunit 1 to the active site in subunit 1, a binuclear center (BNC) formed by heme A3 and copper B (CU(B)). The BNC reduces molecular oxygen to 2 water molecules using 4 electrons from cytochrome c in the IMS and 4 protons from the mitochondrial matrix. The protein is Cytochrome c oxidase subunit 5A, mitochondrial of Drosophila melanogaster (Fruit fly).